The chain runs to 1137 residues: DNA-directed RNA polymerase III subunit RPC2 (1137 aa).

A C4-type zinc finger spans residues 1084–1099; sequence DVCRTCGRMAYCSWCH. The Zn(2+) site is built by Cys1086, Cys1089, Cys1098, and Cys1101.

The protein belongs to the RNA polymerase beta chain family. In terms of assembly, component of the RNA polymerase III (Pol III) complex consisting of 17 subunits.

The protein resides in the nucleus. It catalyses the reaction RNA(n) + a ribonucleoside 5'-triphosphate = RNA(n+1) + diphosphate. Functionally, DNA-dependent RNA polymerase catalyzes the transcription of DNA into RNA using the four ribonucleoside triphosphates as substrates. Second largest core component of RNA polymerase III which synthesizes small RNAs, such as 5S rRNA and tRNAs. Proposed to contribute to the polymerase catalytic activity and forms the polymerase active center together with the largest subunit. Pol III is composed of mobile elements and Polr3B is part of the core element with the central large cleft and probably a clamp element that moves to open and close the cleft. The polypeptide is DNA-directed RNA polymerase III subunit RPC2 (Drosophila melanogaster (Fruit fly)).